Consider the following 148-residue polypeptide: SsrA-binding protein (148 aa).

Residues 129–148 (ETEKDRDWQREKARLMREKA) are disordered.

It belongs to the SmpB family.

The protein localises to the cytoplasm. Functionally, required for rescue of stalled ribosomes mediated by trans-translation. Binds to transfer-messenger RNA (tmRNA), required for stable association of tmRNA with ribosomes. tmRNA and SmpB together mimic tRNA shape, replacing the anticodon stem-loop with SmpB. tmRNA is encoded by the ssrA gene; the 2 termini fold to resemble tRNA(Ala) and it encodes a 'tag peptide', a short internal open reading frame. During trans-translation Ala-aminoacylated tmRNA acts like a tRNA, entering the A-site of stalled ribosomes, displacing the stalled mRNA. The ribosome then switches to translate the ORF on the tmRNA; the nascent peptide is terminated with the 'tag peptide' encoded by the tmRNA and targeted for degradation. The ribosome is freed to recommence translation, which seems to be the essential function of trans-translation. The sequence is that of SsrA-binding protein from Ralstonia nicotianae (strain ATCC BAA-1114 / GMI1000) (Ralstonia solanacearum).